The sequence spans 212 residues: Redox-sensing transcriptional repressor Rex (212 aa).

Positions leucine 17 to phenylalanine 56 form a DNA-binding region, H-T-H motif. Glycine 91–glycine 96 is a binding site for NAD(+).

This sequence belongs to the transcriptional regulatory Rex family. Homodimer.

It localises to the cytoplasm. Functionally, modulates transcription in response to changes in cellular NADH/NAD(+) redox state. In Chloroflexus aurantiacus (strain ATCC 29366 / DSM 635 / J-10-fl), this protein is Redox-sensing transcriptional repressor Rex.